Reading from the N-terminus, the 509-residue chain is Maturase K (509 aa).

The protein belongs to the intron maturase 2 family. MatK subfamily.

The protein resides in the plastid. The protein localises to the chloroplast. Its function is as follows. Usually encoded in the trnK tRNA gene intron. Probably assists in splicing its own and other chloroplast group II introns. The protein is Maturase K of Nicotiana clevelandii (Wild tobacco).